A 371-amino-acid polypeptide reads, in one-letter code: Serpentine receptor class delta-1 (371 aa).

7 helical membrane-spanning segments follow: residues 31–51 (LSEVICGFGIVLNLLLIYVIF), 62–82 (AVLLFNFAIFDLLTCVASLLA), 109–129 (CFFCHCFVCHAMAHSQWILLI), 148–168 (MIVIVSLFYAMSAVIFLFYFW), 209–229 (IPSLIAIFYMTMPCVPIYFII), 267–287 (AIPIFWLVASGIFTLAEFGII), and 295–315 (ITFRLMDCIPSSSPLVAFIFI). Residues 344-371 (EKFNQPPKQPTNPAQQSANNDAAKTEKV) are disordered. Residues 354-365 (TNPAQQSANNDA) are compositionally biased toward polar residues.

This sequence belongs to the nematode receptor-like protein srd family.

Its subcellular location is the membrane. This Caenorhabditis elegans protein is Serpentine receptor class delta-1 (srd-1).